The primary structure comprises 234 residues: UPF0309 protein lmo0025 (234 aa).

Residues 31 to 205 (VADSIMNDGI…ELMLEKGYTP (175 aa)) enclose the SIS domain.

Belongs to the UPF0309 family.

The polypeptide is UPF0309 protein lmo0025 (Listeria monocytogenes serovar 1/2a (strain ATCC BAA-679 / EGD-e)).